Here is a 480-residue protein sequence, read N- to C-terminus: Glycogen synthase (480 aa).

Lysine 15 is an ADP-alpha-D-glucose binding site.

Belongs to the glycosyltransferase 1 family. Bacterial/plant glycogen synthase subfamily.

The enzyme catalyses [(1-&gt;4)-alpha-D-glucosyl](n) + ADP-alpha-D-glucose = [(1-&gt;4)-alpha-D-glucosyl](n+1) + ADP + H(+). The protein operates within glycan biosynthesis; glycogen biosynthesis. Functionally, synthesizes alpha-1,4-glucan chains using ADP-glucose. The chain is Glycogen synthase from Rhizobium johnstonii (strain DSM 114642 / LMG 32736 / 3841) (Rhizobium leguminosarum bv. viciae).